The chain runs to 598 residues: UvrABC system protein C (598 aa).

The GIY-YIG domain occupies 14-91 (DSPGCYLHKD…IQKNMPKYNI (78 aa)). A UVR domain is found at 196 to 231 (DKIIEDLRSKMLAASEEMAFERAAEYRDLISGIATM).

The protein belongs to the UvrC family. Interacts with UvrB in an incision complex.

It localises to the cytoplasm. The UvrABC repair system catalyzes the recognition and processing of DNA lesions. UvrC both incises the 5' and 3' sides of the lesion. The N-terminal half is responsible for the 3' incision and the C-terminal half is responsible for the 5' incision. This is UvrABC system protein C from Streptococcus pyogenes serotype M28 (strain MGAS6180).